A 222-amino-acid chain; its full sequence is GTP cyclohydrolase 1 (222 aa).

C111, H114, and C182 together coordinate Zn(2+).

It belongs to the GTP cyclohydrolase I family. Toroid-shaped homodecamer, composed of two pentamers of five dimers.

The enzyme catalyses GTP + H2O = 7,8-dihydroneopterin 3'-triphosphate + formate + H(+). The protein operates within cofactor biosynthesis; 7,8-dihydroneopterin triphosphate biosynthesis; 7,8-dihydroneopterin triphosphate from GTP: step 1/1. This is GTP cyclohydrolase 1 from Salmonella choleraesuis (strain SC-B67).